The primary structure comprises 1333 residues: DNA-directed RNA polymerase subunit beta' (1333 aa).

Zn(2+) is bound by residues Cys60, Cys62, Cys75, and Cys78. Mg(2+) is bound by residues Asp535, Asp537, and Asp539. Positions 901, 983, 990, and 993 each coordinate Zn(2+).

It belongs to the RNA polymerase beta' chain family. In terms of assembly, the RNAP catalytic core consists of 2 alpha, 1 beta, 1 beta' and 1 omega subunit. When a sigma factor is associated with the core the holoenzyme is formed, which can initiate transcription. Mg(2+) serves as cofactor. It depends on Zn(2+) as a cofactor.

It catalyses the reaction RNA(n) + a ribonucleoside 5'-triphosphate = RNA(n+1) + diphosphate. In terms of biological role, DNA-dependent RNA polymerase catalyzes the transcription of DNA into RNA using the four ribonucleoside triphosphates as substrates. This is DNA-directed RNA polymerase subunit beta' from Corynebacterium glutamicum (strain ATCC 13032 / DSM 20300 / JCM 1318 / BCRC 11384 / CCUG 27702 / LMG 3730 / NBRC 12168 / NCIMB 10025 / NRRL B-2784 / 534).